The primary structure comprises 322 residues: Phosphatidylserine decarboxylase proenzyme (322 aa).

Catalysis depends on charge relay system; for autoendoproteolytic cleavage activity residues aspartate 90, histidine 147, and serine 254. The active-site Schiff-base intermediate with substrate; via pyruvic acid; for decarboxylase activity is the serine 254. Serine 254 carries the post-translational modification Pyruvic acid (Ser); by autocatalysis. Residues 292–322 (TPDAEPSPLPAEEIEAEHDASPLVDDKKDQV) form a disordered region. The span at 308-322 (EHDASPLVDDKKDQV) shows a compositional bias: basic and acidic residues.

It belongs to the phosphatidylserine decarboxylase family. PSD-B subfamily. Prokaryotic type I sub-subfamily. As to quaternary structure, heterodimer of a large membrane-associated beta subunit and a small pyruvoyl-containing alpha subunit. The cofactor is pyruvate. Post-translationally, is synthesized initially as an inactive proenzyme. Formation of the active enzyme involves a self-maturation process in which the active site pyruvoyl group is generated from an internal serine residue via an autocatalytic post-translational modification. Two non-identical subunits are generated from the proenzyme in this reaction, and the pyruvate is formed at the N-terminus of the alpha chain, which is derived from the carboxyl end of the proenzyme. The autoendoproteolytic cleavage occurs by a canonical serine protease mechanism, in which the side chain hydroxyl group of the serine supplies its oxygen atom to form the C-terminus of the beta chain, while the remainder of the serine residue undergoes an oxidative deamination to produce ammonia and the pyruvoyl prosthetic group on the alpha chain. During this reaction, the Ser that is part of the protease active site of the proenzyme becomes the pyruvoyl prosthetic group, which constitutes an essential element of the active site of the mature decarboxylase.

The protein localises to the cell membrane. It carries out the reaction a 1,2-diacyl-sn-glycero-3-phospho-L-serine + H(+) = a 1,2-diacyl-sn-glycero-3-phosphoethanolamine + CO2. The protein operates within phospholipid metabolism; phosphatidylethanolamine biosynthesis; phosphatidylethanolamine from CDP-diacylglycerol: step 2/2. Catalyzes the formation of phosphatidylethanolamine (PtdEtn) from phosphatidylserine (PtdSer). This is Phosphatidylserine decarboxylase proenzyme from Escherichia coli O7:K1 (strain IAI39 / ExPEC).